The primary structure comprises 268 residues: Tryptophan synthase alpha chain (268 aa).

Residues Glu49 and Asp60 each act as proton acceptor in the active site.

This sequence belongs to the TrpA family. In terms of assembly, tetramer of two alpha and two beta chains.

The enzyme catalyses (1S,2R)-1-C-(indol-3-yl)glycerol 3-phosphate + L-serine = D-glyceraldehyde 3-phosphate + L-tryptophan + H2O. Its pathway is amino-acid biosynthesis; L-tryptophan biosynthesis; L-tryptophan from chorismate: step 5/5. Its function is as follows. The alpha subunit is responsible for the aldol cleavage of indoleglycerol phosphate to indole and glyceraldehyde 3-phosphate. In Citrobacter koseri (strain ATCC BAA-895 / CDC 4225-83 / SGSC4696), this protein is Tryptophan synthase alpha chain.